The chain runs to 425 residues: Serine--tRNA ligase 1 (425 aa).

230–232 is a binding site for L-serine; it reads TSE. Residues 261–263 and Val-277 each bind ATP; that span reads RRE. Glu-284 is a binding site for L-serine. 348 to 351 lines the ATP pocket; the sequence is ELTS. Thr-382 is a binding site for L-serine.

Belongs to the class-II aminoacyl-tRNA synthetase family. Type-1 seryl-tRNA synthetase subfamily. As to quaternary structure, homodimer. The tRNA molecule binds across the dimer.

The protein resides in the cytoplasm. It carries out the reaction tRNA(Ser) + L-serine + ATP = L-seryl-tRNA(Ser) + AMP + diphosphate + H(+). It catalyses the reaction tRNA(Sec) + L-serine + ATP = L-seryl-tRNA(Sec) + AMP + diphosphate + H(+). It participates in aminoacyl-tRNA biosynthesis; selenocysteinyl-tRNA(Sec) biosynthesis; L-seryl-tRNA(Sec) from L-serine and tRNA(Sec): step 1/1. In terms of biological role, catalyzes the attachment of serine to tRNA(Ser). Is also able to aminoacylate tRNA(Sec) with serine, to form the misacylated tRNA L-seryl-tRNA(Sec), which will be further converted into selenocysteinyl-tRNA(Sec). The protein is Serine--tRNA ligase 1 of Streptomyces avermitilis (strain ATCC 31267 / DSM 46492 / JCM 5070 / NBRC 14893 / NCIMB 12804 / NRRL 8165 / MA-4680).